Consider the following 149-residue polypeptide: ATP synthase epsilon chain (149 aa).

Composition is skewed to basic and acidic residues over residues 99-116 and 123-134; these read DVERAESAEERAKRRLEE and RETHEAARDRAR. A disordered region spans residues 99–149; sequence DVERAESAEERAKRRLEEGVQEEERETHEAARDRARNRLRVAMGKVGTRQS.

It belongs to the ATPase epsilon chain family. In terms of assembly, F-type ATPases have 2 components, CF(1) - the catalytic core - and CF(0) - the membrane proton channel. CF(1) has five subunits: alpha(3), beta(3), gamma(1), delta(1), epsilon(1). CF(0) has three main subunits: a, b and c.

The protein localises to the cell inner membrane. Its function is as follows. Produces ATP from ADP in the presence of a proton gradient across the membrane. This is ATP synthase epsilon chain from Salinibacter ruber (strain DSM 13855 / M31).